The primary structure comprises 642 residues: Arginine--tRNA ligase (642 aa).

Residues 133–143 (VNPTKPLHMGH) carry the 'HIGH' region motif.

Belongs to the class-I aminoacyl-tRNA synthetase family.

The protein resides in the cytoplasm. It catalyses the reaction tRNA(Arg) + L-arginine + ATP = L-arginyl-tRNA(Arg) + AMP + diphosphate. The sequence is that of Arginine--tRNA ligase from Thermococcus kodakarensis (strain ATCC BAA-918 / JCM 12380 / KOD1) (Pyrococcus kodakaraensis (strain KOD1)).